Consider the following 168-residue polypeptide: 2-C-methyl-D-erythritol 2,4-cyclodiphosphate synthase (168 aa).

A divalent metal cation is bound by residues aspartate 11 and histidine 13. 4-CDP-2-C-methyl-D-erythritol 2-phosphate is bound by residues 11 to 13 (DVH) and 41 to 42 (HS). Histidine 49 serves as a coordination point for a divalent metal cation. Residues 63–65 (DIG), 68–72 (FPDTD), 139–142 (TTTE), phenylalanine 146, and arginine 149 contribute to the 4-CDP-2-C-methyl-D-erythritol 2-phosphate site.

Belongs to the IspF family. Homotrimer. It depends on a divalent metal cation as a cofactor.

It carries out the reaction 4-CDP-2-C-methyl-D-erythritol 2-phosphate = 2-C-methyl-D-erythritol 2,4-cyclic diphosphate + CMP. The protein operates within isoprenoid biosynthesis; isopentenyl diphosphate biosynthesis via DXP pathway; isopentenyl diphosphate from 1-deoxy-D-xylulose 5-phosphate: step 4/6. Involved in the biosynthesis of isopentenyl diphosphate (IPP) and dimethylallyl diphosphate (DMAPP), two major building blocks of isoprenoid compounds. Catalyzes the conversion of 4-diphosphocytidyl-2-C-methyl-D-erythritol 2-phosphate (CDP-ME2P) to 2-C-methyl-D-erythritol 2,4-cyclodiphosphate (ME-CPP) with a corresponding release of cytidine 5-monophosphate (CMP). This is 2-C-methyl-D-erythritol 2,4-cyclodiphosphate synthase from Psychrobacter arcticus (strain DSM 17307 / VKM B-2377 / 273-4).